A 118-amino-acid chain; its full sequence is Large ribosomal subunit protein uL18 (118 aa).

This sequence belongs to the universal ribosomal protein uL18 family. In terms of assembly, part of the 50S ribosomal subunit; part of the 5S rRNA/L5/L18/L25 subcomplex. Contacts the 5S and 23S rRNAs.

This is one of the proteins that bind and probably mediate the attachment of the 5S RNA into the large ribosomal subunit, where it forms part of the central protuberance. The chain is Large ribosomal subunit protein uL18 from Acidobacterium capsulatum (strain ATCC 51196 / DSM 11244 / BCRC 80197 / JCM 7670 / NBRC 15755 / NCIMB 13165 / 161).